We begin with the raw amino-acid sequence, 78 residues long: Acyl carrier protein (78 aa).

The Carrier domain occupies 2–77; that stretch reads SDTADRVKKI…DAIKYIDENK (76 aa). At S37 the chain carries O-(pantetheine 4'-phosphoryl)serine.

This sequence belongs to the acyl carrier protein (ACP) family. In terms of processing, 4'-phosphopantetheine is transferred from CoA to a specific serine of apo-ACP by AcpS. This modification is essential for activity because fatty acids are bound in thioester linkage to the sulfhydryl of the prosthetic group.

The protein localises to the cytoplasm. It participates in lipid metabolism; fatty acid biosynthesis. Carrier of the growing fatty acid chain in fatty acid biosynthesis. This is Acyl carrier protein from Novosphingobium aromaticivorans (strain ATCC 700278 / DSM 12444 / CCUG 56034 / CIP 105152 / NBRC 16084 / F199).